An 81-amino-acid polypeptide reads, in one-letter code: Protein L83L (81 aa).

Residues 1–28 (MDTSLKNNDGALDADNKNYQDYKDEPDK) are disordered. Positions 14 to 28 (ADNKNYQDYKDEPDK) are enriched in basic and acidic residues.

Belongs to the asfivirus L83L family. In terms of assembly, interacts with host IL1B.

The protein localises to the host cytoplasm. Its function is as follows. May subvert the host innate immune response by interacting with host IL1B and interfering with its function. The protein is Protein L83L of African swine fever virus (isolate Tick/South Africa/Pretoriuskop Pr4/1996) (ASFV).